Here is a 665-residue protein sequence, read N- to C-terminus: Auxin response factor 1 (665 aa).

Positions 124 to 226 form a DNA-binding region, TF-B3; sequence FCKTLTASDT…ELRVGVRRHM (103 aa). 3 disordered regions span residues 356–408, 496–542, and 645–665; these read VANS…SVPL, PVPS…RQIR, and KADA…AGSR. Composition is skewed to polar residues over residues 497-519, 530-542, and 651-665; these read VPSN…SDIP, LRSP…RQIR, and NGNT…AGSR. A PB1 domain is found at 542–635; sequence RSCTKVHMQG…EVKKLSPKNK (94 aa).

The protein belongs to the ARF family. As to quaternary structure, homodimers and heterodimers. Interacts with the auxin-responsive proteins IAA12, IAA13, IAA17 and with ARF2. Binds to RIN13 in the nucleus. Expressed in the whole plant.

The protein resides in the nucleus. It localises to the cytoplasm. Its function is as follows. Auxin response factors (ARFs) are transcriptional factors that bind specifically to the DNA sequence 5'-TGTCTC-3' found in the auxin-responsive promoter elements (AuxREs). Seems to act as transcriptional repressor. Formation of heterodimers with Aux/IAA proteins may alter their ability to modulate early auxin response genes expression. Promotes flowering, stamen development, floral organ abscission and fruit dehiscence. Acts as a repressor of IAA2, IAA3 and IAA7. Together with RIN13, promotes leaf senescence and cell death. This is Auxin response factor 1 from Arabidopsis thaliana (Mouse-ear cress).